We begin with the raw amino-acid sequence, 431 residues long: tRNA(Ile)-lysidine synthase (431 aa).

19-24 (STGIDS) provides a ligand contact to ATP.

Belongs to the tRNA(Ile)-lysidine synthase family.

Its subcellular location is the cytoplasm. The enzyme catalyses cytidine(34) in tRNA(Ile2) + L-lysine + ATP = lysidine(34) in tRNA(Ile2) + AMP + diphosphate + H(+). Its function is as follows. Ligates lysine onto the cytidine present at position 34 of the AUA codon-specific tRNA(Ile) that contains the anticodon CAU, in an ATP-dependent manner. Cytidine is converted to lysidine, thus changing the amino acid specificity of the tRNA from methionine to isoleucine. The chain is tRNA(Ile)-lysidine synthase from Staphylococcus aureus (strain COL).